The sequence spans 502 residues: Glycerol kinase (502 aa).

ADP is bound at residue Thr-14. Residues Thr-14, Thr-15, and Ser-16 each contribute to the ATP site. Thr-14 is a sn-glycerol 3-phosphate binding site. Arg-18 is an ADP binding site. Arg-84, Glu-85, Tyr-136, and Asp-246 together coordinate sn-glycerol 3-phosphate. 5 residues coordinate glycerol: Arg-84, Glu-85, Tyr-136, Asp-246, and Gln-247. ADP contacts are provided by Thr-268 and Gly-311. ATP is bound by residues Thr-268, Gly-311, Gln-315, and Gly-412. The ADP site is built by Gly-412 and Asn-416.

Belongs to the FGGY kinase family. As to quaternary structure, homotetramer and homodimer (in equilibrium). Heterodimer with EIIA-Glc. Binds 1 zinc ion per glycerol kinase EIIA-Glc dimer. The zinc ion is important for dimerization.

The catalysed reaction is glycerol + ATP = sn-glycerol 3-phosphate + ADP + H(+). Its pathway is polyol metabolism; glycerol degradation via glycerol kinase pathway; sn-glycerol 3-phosphate from glycerol: step 1/1. Activity of this regulatory enzyme is affected by several metabolites. Allosterically and non-competitively inhibited by fructose 1,6-bisphosphate (FBP) and unphosphorylated phosphocarrier protein EIIA-Glc (III-Glc), an integral component of the bacterial phosphotransferase (PTS) system. In terms of biological role, key enzyme in the regulation of glycerol uptake and metabolism. Catalyzes the phosphorylation of glycerol to yield sn-glycerol 3-phosphate. The polypeptide is Glycerol kinase (Shigella flexneri).